Consider the following 146-residue polypeptide: Large ribosomal subunit protein uL16 (146 aa).

This sequence belongs to the universal ribosomal protein uL16 family. As to quaternary structure, part of the 50S ribosomal subunit.

Its function is as follows. Binds 23S rRNA and is also seen to make contacts with the A and possibly P site tRNAs. The polypeptide is Large ribosomal subunit protein uL16 (Caulobacter sp. (strain K31)).